The sequence spans 203 residues: Proteasome subunit beta 1 (203 aa).

The propeptide at 1-7 is removed in mature form; by autocatalysis; sequence MAEKLKG. The active-site Nucleophile is the Thr-8.

The protein belongs to the peptidase T1B family. As to quaternary structure, the 20S proteasome core is composed of 14 alpha and 14 beta subunits that assemble into four stacked heptameric rings, resulting in a barrel-shaped structure. The two inner rings, each composed of seven catalytic beta subunits, are sandwiched by two outer rings, each composed of seven alpha subunits. The catalytic chamber with the active sites is on the inside of the barrel. Has a gated structure, the ends of the cylinder being occluded by the N-termini of the alpha-subunits. Is capped at one or both ends by the proteasome regulatory ATPase, PAN.

The protein resides in the cytoplasm. The enzyme catalyses Cleavage of peptide bonds with very broad specificity.. The formation of the proteasomal ATPase PAN-20S proteasome complex, via the docking of the C-termini of PAN into the intersubunit pockets in the alpha-rings, triggers opening of the gate for substrate entry. Interconversion between the open-gate and close-gate conformations leads to a dynamic regulation of the 20S proteasome proteolysis activity. In terms of biological role, component of the proteasome core, a large protease complex with broad specificity involved in protein degradation. The chain is Proteasome subunit beta 1 from Thermococcus onnurineus (strain NA1).